The primary structure comprises 218 residues: Ribonuclease HII (218 aa).

Residues 13–202 enclose the RNase H type-2 domain; sequence DLVAGVDEVG…VRAAHEARAT (190 aa). A divalent metal cation is bound by residues Asp19, Glu20, and Asp111.

This sequence belongs to the RNase HII family. The cofactor is Mn(2+). It depends on Mg(2+) as a cofactor.

It localises to the cytoplasm. The enzyme catalyses Endonucleolytic cleavage to 5'-phosphomonoester.. Endonuclease that specifically degrades the RNA of RNA-DNA hybrids. This is Ribonuclease HII from Pseudomonas syringae pv. syringae (strain B728a).